A 103-amino-acid polypeptide reads, in one-letter code: Pyrimidine/purine nucleoside phosphorylase (103 aa).

The protein belongs to the nucleoside phosphorylase PpnP family.

It carries out the reaction a purine D-ribonucleoside + phosphate = a purine nucleobase + alpha-D-ribose 1-phosphate. It catalyses the reaction adenosine + phosphate = alpha-D-ribose 1-phosphate + adenine. The catalysed reaction is cytidine + phosphate = cytosine + alpha-D-ribose 1-phosphate. The enzyme catalyses guanosine + phosphate = alpha-D-ribose 1-phosphate + guanine. It carries out the reaction inosine + phosphate = alpha-D-ribose 1-phosphate + hypoxanthine. It catalyses the reaction thymidine + phosphate = 2-deoxy-alpha-D-ribose 1-phosphate + thymine. The catalysed reaction is uridine + phosphate = alpha-D-ribose 1-phosphate + uracil. The enzyme catalyses xanthosine + phosphate = alpha-D-ribose 1-phosphate + xanthine. In terms of biological role, catalyzes the phosphorolysis of diverse nucleosides, yielding D-ribose 1-phosphate and the respective free bases. Can use uridine, adenosine, guanosine, cytidine, thymidine, inosine and xanthosine as substrates. Also catalyzes the reverse reactions. The chain is Pyrimidine/purine nucleoside phosphorylase from Shewanella sp. (strain W3-18-1).